The chain runs to 344 residues: Dihydroorotase (344 aa).

2 residues coordinate Zn(2+): histidine 13 and histidine 15. Substrate is bound by residues 15–17 (HVR) and asparagine 41. Zn(2+) is bound by residues lysine 99, histidine 136, and histidine 174. Lysine 99 carries the N6-carboxylysine modification. Residue histidine 136 participates in substrate binding. Leucine 219 serves as a coordination point for substrate. Residue aspartate 247 coordinates Zn(2+). Aspartate 247 is an active-site residue. Substrate contacts are provided by histidine 251 and alanine 263.

This sequence belongs to the metallo-dependent hydrolases superfamily. DHOase family. Class II DHOase subfamily. As to quaternary structure, homodimer. Requires Zn(2+) as cofactor.

The enzyme catalyses (S)-dihydroorotate + H2O = N-carbamoyl-L-aspartate + H(+). It participates in pyrimidine metabolism; UMP biosynthesis via de novo pathway; (S)-dihydroorotate from bicarbonate: step 3/3. Its function is as follows. Catalyzes the reversible cyclization of carbamoyl aspartate to dihydroorotate. This is Dihydroorotase from Aromatoleum aromaticum (strain DSM 19018 / LMG 30748 / EbN1) (Azoarcus sp. (strain EbN1)).